The sequence spans 425 residues: Histone-binding protein RBBP4 (425 aa).

N-acetylalanine is present on Ala-2. WD repeat units follow at residues 32–125 (YDLV…NHEG), 126–175 (EVNR…RLRG), 176–223 (HQKE…KTIF), 225–270 (GHTA…HSVD), 271–314 (AHTA…HSFE), 315–371 (SHKD…FIHG), and 372–404 (GHTA…VWQM).

This sequence belongs to the WD repeat RBAP46/RBAP48/MSI1 family. As to quaternary structure, binds directly to histone H4, probably via helix 1 of the histone fold, a region that is not accessible when histone H4 is in chromatin. Forms a large corepressor complex that contains ncor1, sin3a and possibly sin3b, histone deacetylases hdac2, hdac1, rbbp4 and possibly rbbp7.

The protein localises to the nucleus. The protein resides in the chromosome. It is found in the telomere. In terms of biological role, core histone-binding subunit that may target chromatin assembly factors, chromatin remodeling factors and histone deacetylases to their histone substrates in a manner that is regulated by nucleosomal DNA. Component of several complexes which regulate chromatin metabolism. The chain is Histone-binding protein RBBP4 (rbbp4) from Xenopus tropicalis (Western clawed frog).